A 201-amino-acid chain; its full sequence is Large ribosomal subunit protein uL4 (201 aa).

A disordered region spans residues 44–68; it reads RAQKSRAEVSGSGRKPWRQKGTGRA.

This sequence belongs to the universal ribosomal protein uL4 family. In terms of assembly, part of the 50S ribosomal subunit.

One of the primary rRNA binding proteins, this protein initially binds near the 5'-end of the 23S rRNA. It is important during the early stages of 50S assembly. It makes multiple contacts with different domains of the 23S rRNA in the assembled 50S subunit and ribosome. Its function is as follows. Forms part of the polypeptide exit tunnel. This is Large ribosomal subunit protein uL4 from Buchnera aphidicola subsp. Acyrthosiphon pisum (strain APS) (Acyrthosiphon pisum symbiotic bacterium).